A 505-amino-acid chain; its full sequence is tRNA-2-methylthio-N(6)-dimethylallyladenosine synthase (505 aa).

The segment at 1 to 39 (MGQKAKAQAPTTHPRPHTLSSQVAPALPRRPRHAAPESL) is disordered. The MTTase N-terminal domain occupies 47–162 (MKAHLITYGC…IGAALESNER (116 aa)). [4Fe-4S] cluster-binding residues include Cys56, Cys92, Cys125, Cys194, Cys198, and Cys201. Residues 180 to 413 (PSGKLQAHLT…IARQKDWSAR (234 aa)) form the Radical SAM core domain. Positions 416–479 (AQKVGTVQQV…PHMMYGHILG (64 aa)) constitute a TRAM domain.

Belongs to the methylthiotransferase family. MiaB subfamily. As to quaternary structure, monomer. Requires [4Fe-4S] cluster as cofactor.

The protein localises to the cytoplasm. It carries out the reaction N(6)-dimethylallyladenosine(37) in tRNA + (sulfur carrier)-SH + AH2 + 2 S-adenosyl-L-methionine = 2-methylsulfanyl-N(6)-dimethylallyladenosine(37) in tRNA + (sulfur carrier)-H + 5'-deoxyadenosine + L-methionine + A + S-adenosyl-L-homocysteine + 2 H(+). In terms of biological role, catalyzes the methylthiolation of N6-(dimethylallyl)adenosine (i(6)A), leading to the formation of 2-methylthio-N6-(dimethylallyl)adenosine (ms(2)i(6)A) at position 37 in tRNAs that read codons beginning with uridine. The chain is tRNA-2-methylthio-N(6)-dimethylallyladenosine synthase from Deinococcus radiodurans (strain ATCC 13939 / DSM 20539 / JCM 16871 / CCUG 27074 / LMG 4051 / NBRC 15346 / NCIMB 9279 / VKM B-1422 / R1).